Consider the following 166-residue polypeptide: Ribonuclease P protein component (166 aa).

This sequence belongs to the RnpA family. Consists of a catalytic RNA component (M1 or rnpB) and a protein subunit.

The enzyme catalyses Endonucleolytic cleavage of RNA, removing 5'-extranucleotides from tRNA precursor.. In terms of biological role, RNaseP catalyzes the removal of the 5'-leader sequence from pre-tRNA to produce the mature 5'-terminus. It can also cleave other RNA substrates such as 4.5S RNA. The protein component plays an auxiliary but essential role in vivo by binding to the 5'-leader sequence and broadening the substrate specificity of the ribozyme. The protein is Ribonuclease P protein component of Helicobacter pylori (strain HPAG1).